The sequence spans 72 residues: Translation initiation factor IF-1 (72 aa).

In terms of domain architecture, S1-like spans 1-72; it reads MAKDDVIEVE…TRGRITYRYK (72 aa). Tyrosine 60 bears the Phosphotyrosine mark.

It belongs to the IF-1 family. Component of the 30S ribosomal translation pre-initiation complex which assembles on the 30S ribosome in the order IF-2 and IF-3, IF-1 and N-formylmethionyl-tRNA(fMet); mRNA recruitment can occur at any time during PIC assembly.

Its subcellular location is the cytoplasm. One of the essential components for the initiation of protein synthesis. Stabilizes the binding of IF-2 and IF-3 on the 30S subunit to which N-formylmethionyl-tRNA(fMet) subsequently binds. Helps modulate mRNA selection, yielding the 30S pre-initiation complex (PIC). Upon addition of the 50S ribosomal subunit IF-1, IF-2 and IF-3 are released leaving the mature 70S translation initiation complex. The sequence is that of Translation initiation factor IF-1 from Geobacillus kaustophilus (strain HTA426).